The primary structure comprises 238 residues: 2-C-methyl-D-erythritol 4-phosphate cytidylyltransferase (238 aa).

This sequence belongs to the IspD/TarI cytidylyltransferase family. IspD subfamily.

The enzyme catalyses 2-C-methyl-D-erythritol 4-phosphate + CTP + H(+) = 4-CDP-2-C-methyl-D-erythritol + diphosphate. The protein operates within isoprenoid biosynthesis; isopentenyl diphosphate biosynthesis via DXP pathway; isopentenyl diphosphate from 1-deoxy-D-xylulose 5-phosphate: step 2/6. Catalyzes the formation of 4-diphosphocytidyl-2-C-methyl-D-erythritol from CTP and 2-C-methyl-D-erythritol 4-phosphate (MEP). In Salinibacter ruber (strain DSM 13855 / M31), this protein is 2-C-methyl-D-erythritol 4-phosphate cytidylyltransferase.